An 858-amino-acid chain; its full sequence is DNA mismatch repair protein MutS (858 aa).

ATP is bound at residue 600 to 607 (GPNMSGKS). The tract at residues 803 to 823 (EAASDEVDDNNSENSPMTDAE) is disordered.

The protein belongs to the DNA mismatch repair MutS family.

In terms of biological role, this protein is involved in the repair of mismatches in DNA. It is possible that it carries out the mismatch recognition step. This protein has a weak ATPase activity. The protein is DNA mismatch repair protein MutS of Lactobacillus helveticus (strain DPC 4571).